The following is a 167-amino-acid chain: Endoribonuclease YbeY (167 aa).

Residues histidine 131, histidine 135, and histidine 141 each contribute to the Zn(2+) site.

Belongs to the endoribonuclease YbeY family. Zn(2+) is required as a cofactor.

The protein localises to the cytoplasm. Functionally, single strand-specific metallo-endoribonuclease involved in late-stage 70S ribosome quality control and in maturation of the 3' terminus of the 16S rRNA. The polypeptide is Endoribonuclease YbeY (Rickettsia conorii (strain ATCC VR-613 / Malish 7)).